Reading from the N-terminus, the 556-residue chain is Dihydroxy-acid dehydratase (556 aa).

Aspartate 78 is a Mg(2+) binding site. Cysteine 119 lines the [2Fe-2S] cluster pocket. Aspartate 120 and lysine 121 together coordinate Mg(2+). At lysine 121 the chain carries N6-carboxylysine. Residue cysteine 191 coordinates [2Fe-2S] cluster. Position 442 (glutamate 442) interacts with Mg(2+). The Proton acceptor role is filled by serine 468.

It belongs to the IlvD/Edd family. In terms of assembly, homodimer. [2Fe-2S] cluster serves as cofactor. It depends on Mg(2+) as a cofactor.

The catalysed reaction is (2R)-2,3-dihydroxy-3-methylbutanoate = 3-methyl-2-oxobutanoate + H2O. It catalyses the reaction (2R,3R)-2,3-dihydroxy-3-methylpentanoate = (S)-3-methyl-2-oxopentanoate + H2O. It functions in the pathway amino-acid biosynthesis; L-isoleucine biosynthesis; L-isoleucine from 2-oxobutanoate: step 3/4. The protein operates within amino-acid biosynthesis; L-valine biosynthesis; L-valine from pyruvate: step 3/4. Functions in the biosynthesis of branched-chain amino acids. Catalyzes the dehydration of (2R,3R)-2,3-dihydroxy-3-methylpentanoate (2,3-dihydroxy-3-methylvalerate) into 2-oxo-3-methylpentanoate (2-oxo-3-methylvalerate) and of (2R)-2,3-dihydroxy-3-methylbutanoate (2,3-dihydroxyisovalerate) into 2-oxo-3-methylbutanoate (2-oxoisovalerate), the penultimate precursor to L-isoleucine and L-valine, respectively. The protein is Dihydroxy-acid dehydratase of Clostridium kluyveri (strain NBRC 12016).